A 160-amino-acid polypeptide reads, in one-letter code: V-type proton ATPase subunit c (160 aa).

The Lumenal segment spans residues 1-6 (MSDLCP). A helical membrane pass occupies residues 7-27 (VYAPFFGSIGCAAAIVFTCFG). Over 28 to 53 (ASYGTAKSGVGICATSVTRPDLLVKN) the chain is Cytoplasmic. A helical membrane pass occupies residues 54–74 (VVPVVMAGIIAIYGLVVSVLV). The Lumenal portion of the chain corresponds to 75-90 (SDSLSQKQALYTGFIQ). The helical transmembrane segment at 91 to 111 (LGAGLSVGLSGLAAGFAIGIV) threads the bilayer. The Cytoplasmic portion of the chain corresponds to 112 to 129 (GDAGVRGTAQQPRLFVGM). The helical transmembrane segment at 130–150 (ILILIFAEVLGLYGLIVALLL) threads the bilayer. Residues 151-160 (NSRASQDVTC) lie on the Lumenal side of the membrane.

This sequence belongs to the V-ATPase proteolipid subunit family. In terms of assembly, V-ATPase is a heteromultimeric enzyme composed of a peripheral catalytic V1 complex (components A to H) attached to an integral membrane V0 proton pore complex (components: a, c, c', c'', d, e, f and VOA1). The decameric c-ring forms the proton-conducting pore, and is composed of eight proteolipid subunits c, one subunit c' and one subunit c''.

Its subcellular location is the vacuole membrane. Proton-conducting pore forming subunit of the V0 complex of vacuolar(H+)-ATPase (V-ATPase), a multisubunit enzyme composed of a peripheral complex (V1) that hydrolyzes ATP and a membrane integral complex (V0) that translocates protons. V-ATPase is responsible for acidifying and maintaining the pH of intracellular compartments. This Candida tropicalis (Yeast) protein is V-type proton ATPase subunit c (VMA3).